We begin with the raw amino-acid sequence, 537 residues long: MENSIGLGLIHGLMYGIVPVAPWFVALKRYLLEGKEKGQLAVAGTIAGQVTLLALTFFGWSRVLWVWYYFEPALIILGTMAVVRCALDCWVEQESSLRTAALGPGAGQLASKQEGLYYFLMSFGLMFCNPLHLEGSQTLLSSIPGNRYVYLLAFTVSYTAIIFIFWVTLGYRIFGKAYSGFGAQQTLNRYRIRRVSVGIVAALFLQFANCTPEALVIYHWDSLLAYTPFDGLKHHRTRGYTWEPSSDNAFELSRQSYRATNRAGVSFEQGAKRAVQFKPFWNTETRFDECNQVRERELSNEDWNAEATFHEFQGINQGVLRARSVPFNLYMVPNWEKQEDKNYLLTLRQIRDEMDDKLMAESSPQERFLVSPFTDNLDYEVDYQVYPELMAEKAQTKTAYADMVKLIRGTKWTSNHVHLGDGTDVEMSYAKLHALPAEVRLPWHYPVVKPTEVVVQTSSTDTPDSVQLLNDELQENLHFFSNEPERIQQNVYKRLWEHRTFGKVTPRMIDDKVQKRLDDRVNMRREAYVSSNPTKAK.

6 helical membrane-spanning segments follow: residues 5 to 25 (IGLGLIHGLMYGIVPVAPWFV), 40 to 60 (LAVAGTIAGQVTLLALTFFGW), 63 to 83 (VLWVWYYFEPALIILGTMAVV), 115 to 135 (GLYYFLMSFGLMFCNPLHLEG), 149 to 169 (VYLLAFTVSYTAIIFIFWVTL), and 197 to 217 (VGIVAALFLQFANCTPEALVI).

The protein resides in the plastid. It is found in the chloroplast membrane. This is an uncharacterized protein from Ostreococcus tauri.